Consider the following 255-residue polypeptide: 4-hydroxy-tetrahydrodipicolinate reductase (255 aa).

NAD(+)-binding positions include 9-14 (GFKGKM), D35, 89-91 (GTT), and 115-118 (APNF). H145 serves as the catalytic Proton donor/acceptor. H146 provides a ligand contact to (S)-2,3,4,5-tetrahydrodipicolinate. Residue K149 is the Proton donor of the active site. Position 155-156 (155-156 (GT)) interacts with (S)-2,3,4,5-tetrahydrodipicolinate.

This sequence belongs to the DapB family.

The protein resides in the cytoplasm. It catalyses the reaction (S)-2,3,4,5-tetrahydrodipicolinate + NAD(+) + H2O = (2S,4S)-4-hydroxy-2,3,4,5-tetrahydrodipicolinate + NADH + H(+). The catalysed reaction is (S)-2,3,4,5-tetrahydrodipicolinate + NADP(+) + H2O = (2S,4S)-4-hydroxy-2,3,4,5-tetrahydrodipicolinate + NADPH + H(+). Its pathway is amino-acid biosynthesis; L-lysine biosynthesis via DAP pathway; (S)-tetrahydrodipicolinate from L-aspartate: step 4/4. Its function is as follows. Catalyzes the conversion of 4-hydroxy-tetrahydrodipicolinate (HTPA) to tetrahydrodipicolinate. This chain is 4-hydroxy-tetrahydrodipicolinate reductase, found in Streptococcus pneumoniae (strain P1031).